We begin with the raw amino-acid sequence, 136 residues long: Holo-[acyl-carrier-protein] synthase (136 aa).

Aspartate 8 and glutamate 57 together coordinate Mg(2+).

It belongs to the P-Pant transferase superfamily. AcpS family. The cofactor is Mg(2+).

The protein resides in the cytoplasm. It carries out the reaction apo-[ACP] + CoA = holo-[ACP] + adenosine 3',5'-bisphosphate + H(+). Functionally, transfers the 4'-phosphopantetheine moiety from coenzyme A to a Ser of acyl-carrier-protein. The sequence is that of Holo-[acyl-carrier-protein] synthase from Methylorubrum extorquens (strain PA1) (Methylobacterium extorquens).